The chain runs to 463 residues: Endoglucanase (463 aa).

The first 27 residues, 1–27, serve as a signal peptide directing secretion; that stretch reads MVEKRKIFTVLCACGIGFTSYTSCISA. The propeptide occupies 28 to 55; the sequence is AAIDNDTLINNGHKINSSIITNSSQVSA. Glu130 functions as the Proton donor in the catalytic mechanism. The active-site Nucleophile is the Asp191.

It belongs to the glycosyl hydrolase 8 (cellulase D) family. In terms of processing, the N- and the C-terminus may be subjected to proteolysis.

The catalysed reaction is Endohydrolysis of (1-&gt;4)-beta-D-glucosidic linkages in cellulose, lichenin and cereal beta-D-glucans.. In Bacillus sp. (strain KSM-330), this protein is Endoglucanase.